Consider the following 430-residue polypeptide: Probable aspartic-type endopeptidase ARB_07403 (430 aa).

The N-terminal stretch at 1-17 (MHVSTLLVAVLLPLALS) is a signal peptide. A propeptide spans 18-87 (KPTPRKKTGS…SKATAGSGKE (70 aa)) (activation peptide). The interval 66-105 (YHPQHISKLPGNSKATAGSGKEGVESQDEKGEVVNNPTNH) is disordered. A compositionally biased stretch (basic and acidic residues) spans 87–97 (EGVESQDEKGE). The 319-residue stretch at 109–427 (FLSPVTIGGQ…DQRGPSISLA (319 aa)) folds into the Peptidase A1 domain. The active site involves Asp-125. N-linked (GlcNAc...) asparagine glycosylation occurs at Asn-306. Asp-314 is a catalytic residue.

The protein belongs to the peptidase A1 family.

The protein resides in the secreted. Probable secreted aspartic-type endopeptidase which contributes to virulence. The protein is Probable aspartic-type endopeptidase ARB_07403 of Arthroderma benhamiae (strain ATCC MYA-4681 / CBS 112371) (Trichophyton mentagrophytes).